The primary structure comprises 37 residues: Large ribosomal subunit protein bL36 (37 aa).

The protein belongs to the bacterial ribosomal protein bL36 family.

The chain is Large ribosomal subunit protein bL36 (rpmJ) from Mycoplasmoides gallisepticum (strain R(low / passage 15 / clone 2)) (Mycoplasma gallisepticum).